Reading from the N-terminus, the 375-residue chain is Protein NDRG3 (375 aa).

A disordered region spans residues 326 to 375 (RSRTHSASSSGSMEIPRSRSHTSNAQLKSSSNNSLSNQIQETPQTIELSC). The span at 348–363 (SNAQLKSSSNNSLSNQ) shows a compositional bias: low complexity. Residues 364–375 (IQETPQTIELSC) are compositionally biased toward polar residues.

Belongs to the NDRG family.

The protein is Protein NDRG3 of Xenopus laevis (African clawed frog).